The following is a 178-amino-acid chain: Large ribosomal subunit protein uL6 (178 aa).

It belongs to the universal ribosomal protein uL6 family. As to quaternary structure, part of the 50S ribosomal subunit.

Its function is as follows. This protein binds to the 23S rRNA, and is important in its secondary structure. It is located near the subunit interface in the base of the L7/L12 stalk, and near the tRNA binding site of the peptidyltransferase center. This is Large ribosomal subunit protein uL6 from Paenarthrobacter aurescens (strain TC1).